The primary structure comprises 52 residues: Large ribosomal subunit protein eL40 (52 aa).

The protein belongs to the eukaryotic ribosomal protein eL40 family.

The sequence is that of Large ribosomal subunit protein eL40 from Thermococcus onnurineus (strain NA1).